A 1283-amino-acid polypeptide reads, in one-letter code: Rab11 family-interacting protein 1 (1283 aa).

The region spanning 1–126 (MSLMVSAGRG…DQGRRKTQWY (126 aa)) is the C2 domain. Over residues 161 to 185 (SMKDKSRNPFGKLKDKIKGKNKDSG) the composition is skewed to basic and acidic residues. A disordered region spans residues 161-281 (SMKDKSRNPF…VMSHKRTAST (121 aa)). Phosphoserine is present on residues serine 184, serine 202, serine 206, and serine 234. Over residues 225–239 (NLQKTPLSQSMSVLP) the composition is skewed to polar residues. The span at 257–266 (WDEDDNEDES) shows a compositional bias: acidic residues. Phosphoserine occurs at positions 300, 315, 339, 341, 343, 345, 356, 357, and 382. 5 disordered regions span residues 330–727 (EAKG…QEVP), 741–782 (VGEL…ASVP), 835–913 (PQEL…LFRM), 969–993 (DERIDQVEDDGDQVEDDGETAKSST), and 1037–1141 (ASVT…RVEN). Residues 419–433 (ATKEAKESKKPESRR) are compositionally biased toward basic and acidic residues. The residue at position 435 (serine 435) is a Phosphoserine. A compositionally biased stretch (basic and acidic residues) spans 442-451 (GKKDVAKGSE). At serine 477 the chain carries Phosphoserine. Residues 482 to 491 (DLVRRSEKDT) show a composition bias toward basic and acidic residues. Phosphoserine occurs at positions 529 and 545. A compositionally biased stretch (low complexity) spans 588 to 612 (SSESPSVFSSLSSPIAAPISTSTPI). Polar residues predominate over residues 637-652 (QTESLTPVPNSGSSAL). Over residues 698–715 (ETGRQEEELPRFPCKKQD) the composition is skewed to basic and acidic residues. At serine 758 the chain carries Phosphoserine. The span at 855-866 (ESPHAEDSERES) shows a compositional bias: basic and acidic residues. Over residues 975 to 986 (VEDDGDQVEDDG) the composition is skewed to acidic residues. The span at 1037-1048 (ASVTAPSEQTTE) shows a compositional bias: polar residues. Over residues 1116–1131 (SDTHHTSTAESQKKAT) the composition is skewed to basic and acidic residues. Serine 1135 carries the phosphoserine modification. Positions 1211–1273 (KKYSPSDPAF…EETPNILRIP (63 aa)) constitute an FIP-RBD domain. A necessary for interaction with RAB4A and RAB11A, subcellular location and endosomal recycling region spans residues 1219-1283 (AFAYAQLTHD…TQVGKKAGKM (65 aa)).

Interacts with RAB11A (GTP-bound form); the interaction induces RAB11FIP1 recruitment to membranes. Interacts with RAB14 (GTP-bound form). In terms of assembly, homooligomer. Isoform 2 interacts with RAB4A, RAB11A, RAB11B and RAB25. According to PubMed:15280022, RAB4A binding to RAB11FIP1 is of very low affinity in vitro and in vivo. As to expression, isoform 2 is expressed in brain, heart, testis, lung, spleen, ovary and small intestine.

It is found in the recycling endosome. The protein localises to the cytoplasmic vesicle. The protein resides in the phagosome membrane. In terms of biological role, a Rab11 effector protein involved in the endosomal recycling process. Also involved in controlling membrane trafficking along the phagocytic pathway and in phagocytosis. Interaction with RAB14 may function in the process of neurite formation. This Homo sapiens (Human) protein is Rab11 family-interacting protein 1.